A 279-amino-acid polypeptide reads, in one-letter code: Putative pyruvate, phosphate dikinase regulatory protein (279 aa).

Residue 153 to 160 (GVSRTSKT) participates in ADP binding.

This sequence belongs to the pyruvate, phosphate/water dikinase regulatory protein family. PDRP subfamily.

It carries out the reaction N(tele)-phospho-L-histidyl/L-threonyl-[pyruvate, phosphate dikinase] + ADP = N(tele)-phospho-L-histidyl/O-phospho-L-threonyl-[pyruvate, phosphate dikinase] + AMP + H(+). It catalyses the reaction N(tele)-phospho-L-histidyl/O-phospho-L-threonyl-[pyruvate, phosphate dikinase] + phosphate + H(+) = N(tele)-phospho-L-histidyl/L-threonyl-[pyruvate, phosphate dikinase] + diphosphate. Its function is as follows. Bifunctional serine/threonine kinase and phosphorylase involved in the regulation of the pyruvate, phosphate dikinase (PPDK) by catalyzing its phosphorylation/dephosphorylation. The protein is Putative pyruvate, phosphate dikinase regulatory protein of Bradyrhizobium diazoefficiens (strain JCM 10833 / BCRC 13528 / IAM 13628 / NBRC 14792 / USDA 110).